The sequence spans 210 residues: Glutathione S-transferase 3 (210 aa).

Residues 1–80 (MDFYYLPLSA…YLVEKYGKQN (80 aa)) enclose the GST N-terminal domain. Glutathione-binding positions include S9, 50–52 (HTI), and 64–66 (ESR). The GST C-terminal domain occupies 87 to 208 (CPKKRALINQ…AGCLEMKKYF (122 aa)).

This sequence belongs to the GST superfamily. Theta family. As to quaternary structure, homodimer.

The catalysed reaction is RX + glutathione = an S-substituted glutathione + a halide anion + H(+). Functionally, conjugation of reduced glutathione to a wide number of exogenous and endogenous hydrophobic electrophiles. The chain is Glutathione S-transferase 3 (Gst3) from Musca domestica (House fly).